A 574-amino-acid polypeptide reads, in one-letter code: Urease subunit alpha (574 aa).

One can recognise a Urease domain in the interval 131–574 (GAIDSHIHFI…LPMAQRYLLL (444 aa)). 3 residues coordinate Ni(2+): histidine 136, histidine 138, and lysine 219. Lysine 219 bears the N6-carboxylysine mark. Histidine 221 lines the substrate pocket. Ni(2+)-binding residues include histidine 248 and histidine 274. Histidine 322 serves as the catalytic Proton donor. Position 362 (aspartate 362) interacts with Ni(2+). The tract at residues 384-403 (KVQRGPLPEDAANPRGSRND) is disordered.

It belongs to the metallo-dependent hydrolases superfamily. Urease alpha subunit family. As to quaternary structure, heterotrimer of UreA (gamma), UreB (beta) and UreC (alpha) subunits. Three heterotrimers associate to form the active enzyme. Ni cation serves as cofactor. In terms of processing, carboxylation allows a single lysine to coordinate two nickel ions.

The protein resides in the cytoplasm. It carries out the reaction urea + 2 H2O + H(+) = hydrogencarbonate + 2 NH4(+). The protein operates within nitrogen metabolism; urea degradation; CO(2) and NH(3) from urea (urease route): step 1/1. In Prochlorococcus marinus (strain MIT 9313), this protein is Urease subunit alpha.